The following is a 907-amino-acid chain: Protein translocase subunit SecA (907 aa).

ATP is bound by residues Gln87, 105 to 109, and Asp512; that span reads GEGKT. Positions 891, 893, 902, and 903 each coordinate Zn(2+).

Belongs to the SecA family. As to quaternary structure, monomer and homodimer. Part of the essential Sec protein translocation apparatus which comprises SecA, SecYEG and auxiliary proteins SecDF-YajC and YidC. Zn(2+) serves as cofactor.

The protein resides in the cell inner membrane. It localises to the cytoplasm. It catalyses the reaction ATP + H2O + cellular proteinSide 1 = ADP + phosphate + cellular proteinSide 2.. Functionally, part of the Sec protein translocase complex. Interacts with the SecYEG preprotein conducting channel. Has a central role in coupling the hydrolysis of ATP to the transfer of proteins into and across the cell membrane, serving both as a receptor for the preprotein-SecB complex and as an ATP-driven molecular motor driving the stepwise translocation of polypeptide chains across the membrane. The protein is Protein translocase subunit SecA of Shewanella loihica (strain ATCC BAA-1088 / PV-4).